The sequence spans 423 residues: Kynureninase (423 aa).

Residues L105, S106, 133–136, D218, H221, and Y243 contribute to the pyridoxal 5'-phosphate site; that span reads FPSD. K244 is modified (N6-(pyridoxal phosphate)lysine). Residues W273 and N301 each coordinate pyridoxal 5'-phosphate.

Belongs to the kynureninase family. In terms of assembly, homodimer. Pyridoxal 5'-phosphate serves as cofactor.

The enzyme catalyses L-kynurenine + H2O = anthranilate + L-alanine + H(+). It catalyses the reaction 3-hydroxy-L-kynurenine + H2O = 3-hydroxyanthranilate + L-alanine + H(+). It functions in the pathway amino-acid degradation; L-kynurenine degradation; L-alanine and anthranilate from L-kynurenine: step 1/1. The protein operates within cofactor biosynthesis; NAD(+) biosynthesis; quinolinate from L-kynurenine: step 2/3. Its function is as follows. Catalyzes the cleavage of L-kynurenine (L-Kyn) and L-3-hydroxykynurenine (L-3OHKyn) into anthranilic acid (AA) and 3-hydroxyanthranilic acid (3-OHAA), respectively. The sequence is that of Kynureninase from Xanthomonas oryzae pv. oryzae (strain PXO99A).